A 550-amino-acid chain; its full sequence is Neuronal acetylcholine receptor subunit alpha-9-II (550 aa).

The N-terminal stretch at 1 to 20 is a signal peptide; the sequence is MRKMVPVVCFATMLLQVAHS. Topologically, residues 21 to 233 are extracellular; it reads AQGRYAQQLL…YTVLLQRRSS (213 aa). Asn-52 carries N-linked (GlcNAc...) asparagine glycosylation. Cys-150 and Cys-164 are joined by a disulfide. N-linked (GlcNAc...) asparagine glycosylation is present at Asn-165. A disulfide bridge connects residues Cys-214 and Cys-215. Transmembrane regions (helical) follow at residues 234 to 254, 264 to 284, and 298 to 318; these read FYIF…PLGF, VSLG…VAES, and YIAT…IMNI. The Cytoplasmic segment spans residues 319–528; sequence HFCGAEAKPV…WKRVAKVMDR (210 aa). Positions 357-439 are disordered; it reads TSSSSSSSSS…HLSSSKYEGF (83 aa). A compositionally biased stretch (low complexity) spans 358 to 367; that stretch reads SSSSSSSSSS. Over residues 413–422 the composition is skewed to basic residues; the sequence is RHPKPRHQHH. A helical membrane pass occupies residues 529 to 549; it reads FFMWIFFIMVFLMSILIIGKA.

The protein belongs to the ligand-gated ion channel (TC 1.A.9) family. Acetylcholine receptor (TC 1.A.9.1) subfamily. As to expression, expressed in the brain, liver, olfactory mucosa, pituitary gland and hair cells of the saccule.

The protein resides in the postsynaptic cell membrane. It localises to the cell membrane. This chain is Neuronal acetylcholine receptor subunit alpha-9-II, found in Oncorhynchus mykiss (Rainbow trout).